Reading from the N-terminus, the 740-residue chain is Cell death abnormality protein 12 (740 aa).

The ELMO domain maps to 348 to 494; it reads SEIQKVLDID…FVLEQLRHVL (147 aa). Residues 555–690 form a required for punctate localization, cell corpse engulfment and distal cell tip migration region; sequence INHLNYLKKG…ESLAYLVGNT (136 aa). An SH3-binding motif is present at residues 724 to 727; that stretch reads PDVP.

As to quaternary structure, interacts with psr-1. Forms a ternary complex with ced-2 and ced-5.

It is found in the cytoplasm. Its function is as follows. Involved in apoptosis and necrosis. Required for the cell corpse engulfment process. Has roles in the formation of actin halos and distal tip cell migration. Plays no role in amphid axon outgrowth. The protein is Cell death abnormality protein 12 of Caenorhabditis briggsae.